A 163-amino-acid polypeptide reads, in one-letter code: Beta-carbonic anhydrase 1 (163 aa).

The Zn(2+) site is built by cysteine 35, aspartate 37, histidine 88, and cysteine 91.

This sequence belongs to the beta-class carbonic anhydrase family. Homotetramer. It depends on Zn(2+) as a cofactor.

The catalysed reaction is hydrogencarbonate + H(+) = CO2 + H2O. Its function is as follows. Catalyzes the reversible hydration of carbon dioxide to form bicarbonate. This is Beta-carbonic anhydrase 1 from Mycobacterium bovis (strain ATCC BAA-935 / AF2122/97).